A 273-amino-acid chain; its full sequence is Cell wall mannoprotein 1 (273 aa).

An N-terminal signal peptide occupies residues 1–17; it reads MRFSAIFTLGLAGTALA. The segment at 173 to 247 is disordered; it reads DVSDSAPSSS…GSASATSPPL (75 aa). Low complexity predominate over residues 177–247; the sequence is SAPSSSAGSS…GSASATSPPL (71 aa).

It belongs to the cell wall mannoprotein 1 family. Galactomannoprotein, glycosylated.

The protein localises to the secreted. It localises to the cell wall. In terms of biological role, constitutive protein of the cell wall. Antigen target of host humoral immune response. This chain is Cell wall mannoprotein 1, found in Aspergillus flavus.